The primary structure comprises 464 residues: ATP-dependent protease ATPase subunit HslU (464 aa).

Residues I22, 64 to 69 (GVGKTE), D275, E340, and R412 contribute to the ATP site.

It belongs to the ClpX chaperone family. HslU subfamily. In terms of assembly, a double ring-shaped homohexamer of HslV is capped on each side by a ring-shaped HslU homohexamer. The assembly of the HslU/HslV complex is dependent on binding of ATP.

The protein localises to the cytoplasm. Its function is as follows. ATPase subunit of a proteasome-like degradation complex; this subunit has chaperone activity. The binding of ATP and its subsequent hydrolysis by HslU are essential for unfolding of protein substrates subsequently hydrolyzed by HslV. HslU recognizes the N-terminal part of its protein substrates and unfolds these before they are guided to HslV for hydrolysis. In Cytophaga hutchinsonii (strain ATCC 33406 / DSM 1761 / CIP 103989 / NBRC 15051 / NCIMB 9469 / D465), this protein is ATP-dependent protease ATPase subunit HslU.